A 730-amino-acid polypeptide reads, in one-letter code: Rap1 GTPase-activating protein 2 (730 aa).

Residues 247–463 (IVAYDEHEVN…RTRAALLDNL (217 aa)) form the Rap-GAP domain. Disordered stretches follow at residues 510 to 668 (MVGS…STAS) and 698 to 730 (SRSP…STSH). Composition is skewed to polar residues over residues 535 to 557 (GEVT…QSRS) and 597 to 612 (HSSQ…NPSS). Basic and acidic residues predominate over residues 617 to 630 (PNKDRPFVKLKENG). Residues 631-651 (RSNISRSSSSTSSFSSTAGES) show a composition bias toward low complexity. Residues 699–712 (RSPTDIKNRNSPRS) are compositionally biased toward polar residues.

The protein localises to the cytoplasm. Functionally, GTPase activator for the nuclear Ras-related regulatory protein RAP-1A (KREV-1), converting it to the putatively inactive GDP-bound state. This is Rap1 GTPase-activating protein 2 (RAP1GAP2) from Gallus gallus (Chicken).